The primary structure comprises 350 residues: Erythronate-4-phosphate dehydrogenase (350 aa).

Ser45 and Thr66 together coordinate substrate. NAD(+) is bound by residues 124-125, Asp144, 203-205, and Asp226; these read QV and ASR. Arg205 is a catalytic residue. Glu231 is a catalytic residue. Residue His248 is the Proton donor of the active site. Residue Gly251 coordinates NAD(+).

It belongs to the D-isomer specific 2-hydroxyacid dehydrogenase family. PdxB subfamily. In terms of assembly, homodimer.

The protein resides in the cytoplasm. The enzyme catalyses 4-phospho-D-erythronate + NAD(+) = (R)-3-hydroxy-2-oxo-4-phosphooxybutanoate + NADH + H(+). Its pathway is cofactor biosynthesis; pyridoxine 5'-phosphate biosynthesis; pyridoxine 5'-phosphate from D-erythrose 4-phosphate: step 2/5. In terms of biological role, catalyzes the oxidation of erythronate-4-phosphate to 3-hydroxy-2-oxo-4-phosphonooxybutanoate. The chain is Erythronate-4-phosphate dehydrogenase from Legionella pneumophila (strain Lens).